Reading from the N-terminus, the 181-residue chain is UPF0215 protein AF_1433 (181 aa).

This sequence belongs to the UPF0215 family.

The protein is UPF0215 protein AF_1433 of Archaeoglobus fulgidus (strain ATCC 49558 / DSM 4304 / JCM 9628 / NBRC 100126 / VC-16).